A 329-amino-acid chain; its full sequence is POU domain, class 5, transcription factor 2 (329 aa).

Residues 1 to 14 are compositionally biased toward polar residues; it reads MAGRRSSNVFPLSG. Positions 1-24 are disordered; sequence MAGRRSSNVFPLSGNSGGGLEVDT. The region spanning 107-181 is the POU-specific domain; that stretch reads DVSAIQKEME…LLKMWLEEVD (75 aa). Residues 199 to 258 constitute a DNA-binding region (homeobox); that stretch reads RKRRRASRERRIGSNLEKLFLQCPEPTPQQISYIAGRLRLQKDLVQVWFSNRSQMGSWPT.

The protein belongs to the POU transcription factor family. Class-5 subfamily. In adult brain, expressed in the olfactory bulb, becoming specifically concentrated in the mitral cell layer. Also found in the pyramidal cell layer of the hippocampus, in the granule cell layer of the cerebellum and in the cortex.

Its subcellular location is the nucleus. Its function is as follows. Transcription factor that binds preferentially to the octamer motif (5'-ATGTTAAT-3'). May exert a regulatory function in meiotic events that are required for terminal differentiation of male germ cell. This is POU domain, class 5, transcription factor 2 (Pou5f2) from Mus musculus (Mouse).